The sequence spans 194 residues: Potassium-transporting ATPase KdpC subunit (194 aa).

The chain crosses the membrane as a helical span at residues 12 to 34 (LFLLLLTGGVYPLLTTALGQWWF).

It belongs to the KdpC family. The system is composed of three essential subunits: KdpA, KdpB and KdpC.

It is found in the cell inner membrane. Part of the high-affinity ATP-driven potassium transport (or Kdp) system, which catalyzes the hydrolysis of ATP coupled with the electrogenic transport of potassium into the cytoplasm. This subunit acts as a catalytic chaperone that increases the ATP-binding affinity of the ATP-hydrolyzing subunit KdpB by the formation of a transient KdpB/KdpC/ATP ternary complex. The chain is Potassium-transporting ATPase KdpC subunit from Salmonella agona (strain SL483).